The following is a 335-amino-acid chain: Ketol-acid reductoisomerase (NADP(+)) (335 aa).

Residues 2–182 form the KARI N-terminal Rossmann domain; the sequence is VEMFYDKDAD…GCTRAGVIET (181 aa). NADP(+)-binding positions include 25–28, arginine 48, serine 51, and 83–86; these read YGSQ and DEIQ. Histidine 108 is a catalytic residue. Glycine 134 is an NADP(+) binding site. Residues 183–328 form the KARI C-terminal knotted domain; it reads TFREETETDL…KKLRAMMPWL (146 aa). Residues aspartate 191, glutamate 195, glutamate 227, and glutamate 231 each coordinate Mg(2+). Serine 252 lines the substrate pocket.

It belongs to the ketol-acid reductoisomerase family. Requires Mg(2+) as cofactor.

The enzyme catalyses (2R)-2,3-dihydroxy-3-methylbutanoate + NADP(+) = (2S)-2-acetolactate + NADPH + H(+). It carries out the reaction (2R,3R)-2,3-dihydroxy-3-methylpentanoate + NADP(+) = (S)-2-ethyl-2-hydroxy-3-oxobutanoate + NADPH + H(+). It participates in amino-acid biosynthesis; L-isoleucine biosynthesis; L-isoleucine from 2-oxobutanoate: step 2/4. It functions in the pathway amino-acid biosynthesis; L-valine biosynthesis; L-valine from pyruvate: step 2/4. Involved in the biosynthesis of branched-chain amino acids (BCAA). Catalyzes an alkyl-migration followed by a ketol-acid reduction of (S)-2-acetolactate (S2AL) to yield (R)-2,3-dihydroxy-isovalerate. In the isomerase reaction, S2AL is rearranged via a Mg-dependent methyl migration to produce 3-hydroxy-3-methyl-2-ketobutyrate (HMKB). In the reductase reaction, this 2-ketoacid undergoes a metal-dependent reduction by NADPH to yield (R)-2,3-dihydroxy-isovalerate. The sequence is that of Ketol-acid reductoisomerase (NADP(+)) from Methanococcoides burtonii (strain DSM 6242 / NBRC 107633 / OCM 468 / ACE-M).